The chain runs to 174 residues: Nucleoside-triphosphatase THEP1 (174 aa).

ATP-binding positions include G7–S14 and C98–G105.

This sequence belongs to the THEP1 NTPase family.

It carries out the reaction a ribonucleoside 5'-triphosphate + H2O = a ribonucleoside 5'-diphosphate + phosphate + H(+). Its function is as follows. Has nucleotide phosphatase activity towards ATP, GTP, CTP, TTP and UTP. May hydrolyze nucleoside diphosphates with lower efficiency. The chain is Nucleoside-triphosphatase THEP1 from Methanothermobacter thermautotrophicus (strain ATCC 29096 / DSM 1053 / JCM 10044 / NBRC 100330 / Delta H) (Methanobacterium thermoautotrophicum).